The following is a 477-amino-acid chain: Bifunctional protein HldE (477 aa).

The tract at residues 1–318 (MKVNLPAFER…ENAVRGRADT (318 aa)) is ribokinase. Residue 195–198 (NLSE) participates in ATP binding. Asp-264 is an active-site residue. The tract at residues 344–477 (MTNGVFDILH…IKKIQTESEK (134 aa)) is cytidylyltransferase.

In the N-terminal section; belongs to the carbohydrate kinase PfkB family. The protein in the C-terminal section; belongs to the cytidylyltransferase family. As to quaternary structure, homodimer.

The catalysed reaction is D-glycero-beta-D-manno-heptose 7-phosphate + ATP = D-glycero-beta-D-manno-heptose 1,7-bisphosphate + ADP + H(+). The enzyme catalyses D-glycero-beta-D-manno-heptose 1-phosphate + ATP + H(+) = ADP-D-glycero-beta-D-manno-heptose + diphosphate. Its pathway is nucleotide-sugar biosynthesis; ADP-L-glycero-beta-D-manno-heptose biosynthesis; ADP-L-glycero-beta-D-manno-heptose from D-glycero-beta-D-manno-heptose 7-phosphate: step 1/4. It participates in nucleotide-sugar biosynthesis; ADP-L-glycero-beta-D-manno-heptose biosynthesis; ADP-L-glycero-beta-D-manno-heptose from D-glycero-beta-D-manno-heptose 7-phosphate: step 3/4. Its function is as follows. Catalyzes the phosphorylation of D-glycero-D-manno-heptose 7-phosphate at the C-1 position to selectively form D-glycero-beta-D-manno-heptose-1,7-bisphosphate. Functionally, catalyzes the ADP transfer from ATP to D-glycero-beta-D-manno-heptose 1-phosphate, yielding ADP-D-glycero-beta-D-manno-heptose. This chain is Bifunctional protein HldE, found in Salmonella enteritidis PT4 (strain P125109).